Consider the following 574-residue polypeptide: Intraflagellar transport protein 56 homolog (574 aa).

TPR repeat units lie at residues 20-52 (AQKMPELDDFLSNQDYEGAISLLNHKLKAGNLD), 57-90 (DSLQLWLAHCYYRLRNYEEAANVYTFLMNKDDAP), and 151-184 (LEDRLSLAGVNYSRMHYQDAIEVYTSVLQTSPNL).

Belongs to the IFT56 family. In terms of assembly, component of the IFT complex B composed of at least che-2, che-13, dyf-1, dyf-3, dyf-6, dyf-11, dyf-13, ift-20, ift-74, ift-81, ifta-2, osm-1, osm-5 and osm-6.

It is found in the cell projection. The protein localises to the cilium. Its function is as follows. Component of the intraflagellar transport (IFT) complex B required for transport of proteins in the motile cilium. May be required for ciliary entrance and transport of specific ciliary cargo proteins such as che-3 which are related to motility. The chain is Intraflagellar transport protein 56 homolog from Caenorhabditis elegans.